The following is a 695-amino-acid chain: UvrABC system protein B (695 aa).

One can recognise a Helicase ATP-binding domain in the interval 25 to 176; the sequence is KSILEGHRFQ…NQREVLRDLA (152 aa). 38 to 45 contacts ATP; the sequence is GATGTGKT. The Beta-hairpin signature appears at 91-114; the sequence is YYDYYQPEAYVPSTDTYIAKSSSI. In terms of domain architecture, Helicase C-terminal spans 454–617; that stretch reads LLGEIYLRLE…ITPKPIIKKN (164 aa). The UVR domain occupies 652–687; that stretch reads PELIGQLELKMKAAAKNLEFEEAAQLRDQIKKLRQR.

The protein belongs to the UvrB family. Forms a heterotetramer with UvrA during the search for lesions. Interacts with UvrC in an incision complex.

Its subcellular location is the cytoplasm. In terms of biological role, the UvrABC repair system catalyzes the recognition and processing of DNA lesions. A damage recognition complex composed of 2 UvrA and 2 UvrB subunits scans DNA for abnormalities. Upon binding of the UvrA(2)B(2) complex to a putative damaged site, the DNA wraps around one UvrB monomer. DNA wrap is dependent on ATP binding by UvrB and probably causes local melting of the DNA helix, facilitating insertion of UvrB beta-hairpin between the DNA strands. Then UvrB probes one DNA strand for the presence of a lesion. If a lesion is found the UvrA subunits dissociate and the UvrB-DNA preincision complex is formed. This complex is subsequently bound by UvrC and the second UvrB is released. If no lesion is found, the DNA wraps around the other UvrB subunit that will check the other stand for damage. The chain is UvrABC system protein B from Synechococcus sp. (strain JA-3-3Ab) (Cyanobacteria bacterium Yellowstone A-Prime).